The sequence spans 291 residues: Aliphatic sulfonates import ATP-binding protein SsuB 2 (291 aa).

Residues 26–247 form the ABC transporter domain; it reads LRVRGIAKRY…APGLPALASI (222 aa). An ATP-binding site is contributed by 58–65; sequence GRSGCGKS. The tract at residues 264–291 is disordered; the sequence is PAAPKAQTRHGPPRGATAQDTSPLQRIL. Polar residues predominate over residues 281–291; the sequence is AQDTSPLQRIL.

The protein belongs to the ABC transporter superfamily. Aliphatic sulfonates importer (TC 3.A.1.17.2) family. As to quaternary structure, the complex is composed of two ATP-binding proteins (SsuB), two transmembrane proteins (SsuC) and a solute-binding protein (SsuA).

The protein resides in the cell inner membrane. The enzyme catalyses ATP + H2O + aliphatic sulfonate-[sulfonate-binding protein]Side 1 = ADP + phosphate + aliphatic sulfonateSide 2 + [sulfonate-binding protein]Side 1.. Part of the ABC transporter complex SsuABC involved in aliphatic sulfonates import. Responsible for energy coupling to the transport system. This Xanthomonas axonopodis pv. citri (strain 306) protein is Aliphatic sulfonates import ATP-binding protein SsuB 2.